The following is a 107-amino-acid chain: uncharacterized protein (107 aa).

This is an uncharacterized protein from Escherichia coli (strain K12).